The sequence spans 255 residues: MLKVAALYQFTPLPDFRALREPLRELCAAHAIKGSILLAAEGINGTVAGTPRAIDALVSELQTGALFSGRLNDLELKFSQASAMPFARLKVRLKKEIVTLGDPATDPTRAVGIYVDPQDWNELIATPDTILLDVRNDFEVVMGSFEGAIDPQLARFGQFKDFAAQELDHRKHRRIAMYCTGGIRCEKASSYLLSRGFKEVYHLKGGILKYLEQIPESESRWRGECFVFDDRIALGHGLKESRQASPVMDGAPHDD.

One can recognise a Rhodanese domain in the interval 125-219; sequence ATPDTILLDV…YLEQIPESES (95 aa). Catalysis depends on C179, which acts as the Cysteine persulfide intermediate.

It belongs to the TrhO family.

It carries out the reaction uridine(34) in tRNA + AH2 + O2 = 5-hydroxyuridine(34) in tRNA + A + H2O. Catalyzes oxygen-dependent 5-hydroxyuridine (ho5U) modification at position 34 in tRNAs. This is tRNA uridine(34) hydroxylase from Nitrobacter winogradskyi (strain ATCC 25391 / DSM 10237 / CIP 104748 / NCIMB 11846 / Nb-255).